The chain runs to 74 residues: UPF0346 protein YozE (74 aa).

Belongs to the UPF0346 family.

This chain is UPF0346 protein YozE (yozE), found in Bacillus subtilis (strain 168).